The primary structure comprises 54 residues: Toxin AnmTx Cj 1c-1 (54 aa).

A signal peptide spans 1-7 (MLNKRGV). 3 disulfide bridges follow: Cys-9–Cys-50, Cys-11–Cys-41, and Cys-33–Cys-51. Glu-53 carries the post-translational modification Glutamic acid 1-amide.

The protein belongs to the sea anemone sodium channel inhibitory toxin family. Type I subfamily. Contains 3 disulfide bonds.

The protein resides in the secreted. Its subcellular location is the nematocyst. Its function is as follows. In vivo, induces marked paralysis on shrimps (C.multidentata) at 10-20 seconds after injection and a weak toxicity when injected into insect larvae (M.domestica). This is Toxin AnmTx Cj 1c-1 from Epiactis japonica (Sea anemone).